Reading from the N-terminus, the 678-residue chain is NADPH--cytochrome P450 reductase (678 aa).

Glycine 2 is subject to N-acetylglycine. Over 2–22 the chain is Lumenal; that stretch reads GDSHEDTSATVPEAVAEEVSL. A helical membrane pass occupies residues 23–43; it reads FSTTDIVLFSLIVGVLTYWFI. Over 44-678 the chain is Cytoplasmic; that stretch reads FKKKKEEIPE…KGRYSLDVWS (635 aa). The Flavodoxin-like domain occupies 80 to 224; it reads IIVFYGSQTG…DFITWREQFW (145 aa). FMN is bound by residues 86-91, 138-141, 173-182, and aspartate 208; these read SQTGTA, ATYG, and LGNKTYEHFN. The region spanning 279-521 is the FAD-binding FR-type domain; sequence KNPFLAAVTT…FVRKSQFRLP (243 aa). NADP(+) is bound at residue arginine 298. FAD is bound by residues arginine 424, 454-457, 472-474, tyrosine 478, and 488-491; these read RYYS, CAV, and GVAT. NADP(+)-binding positions include threonine 535, 596-597, 602-606, and aspartate 639; these read SR and KVYVQ. Tryptophan 677 contributes to the FAD binding site.

It belongs to the NADPH--cytochrome P450 reductase family. In the N-terminal section; belongs to the flavodoxin family. This sequence in the C-terminal section; belongs to the flavoprotein pyridine nucleotide cytochrome reductase family. FAD serves as cofactor. FMN is required as a cofactor.

It is found in the endoplasmic reticulum membrane. The catalysed reaction is 2 oxidized [cytochrome P450] + NADPH = 2 reduced [cytochrome P450] + NADP(+) + H(+). This enzyme is required for electron transfer from NADP to cytochrome P450 in microsomes. It can also provide electron transfer to heme oxygenase and cytochrome B5. This chain is NADPH--cytochrome P450 reductase, found in Mus musculus (Mouse).